The following is a 311-amino-acid chain: Pseudouridine-5'-phosphate glycosidase (311 aa).

E32 functions as the Proton donor in the catalytic mechanism. Substrate-binding residues include K96 and V116. D148 is a binding site for Mn(2+). Position 150–152 (150–152 (SAD)) interacts with substrate. K169 (nucleophile) is an active-site residue.

This sequence belongs to the pseudouridine-5'-phosphate glycosidase family. In terms of assembly, homotrimer. Mn(2+) serves as cofactor.

The catalysed reaction is D-ribose 5-phosphate + uracil = psi-UMP + H2O. Its function is as follows. Catalyzes the reversible cleavage of pseudouridine 5'-phosphate (PsiMP) to ribose 5-phosphate and uracil. Functions biologically in the cleavage direction, as part of a pseudouridine degradation pathway. The polypeptide is Pseudouridine-5'-phosphate glycosidase (Roseiflexus sp. (strain RS-1)).